The following is a 418-amino-acid chain: Somatostatin receptor type 3 (418 aa).

Residues 1–21 are disordered; sequence MDMLHPSSVSTTSEPENASSA. The Extracellular segment spans residues 1-43; that stretch reads MDMLHPSSVSTTSEPENASSAWPPDATLGNVSAGPSPAGLAVS. A compositionally biased stretch (polar residues) spans 7–20; that stretch reads SSVSTTSEPENASS. N-linked (GlcNAc...) asparagine glycans are attached at residues N17 and N30. Residues 44–69 form a helical membrane-spanning segment; the sequence is GVLIPLVYLVVCVVGLLGNSLVIYVV. Residues 70–79 lie on the Cytoplasmic side of the membrane; sequence LRHTASPSVT. The helical transmembrane segment at 80 to 101 threads the bilayer; sequence NVYILNLALADELFMLGLPFLA. The Extracellular segment spans residues 102–116; the sequence is AQNALSYWPFGSLMC. Cysteines 116 and 191 form a disulfide. A helical membrane pass occupies residues 117-138; it reads RLVMAVDGINQFTSIFCLTVMS. Topologically, residues 139 to 161 are cytoplasmic; sequence VDRYLAVVHPTRSARWRTAPVAR. Residues 162 to 181 traverse the membrane as a helical segment; the sequence is TVSAAVWVASAVVVLPVVVF. The Extracellular portion of the chain corresponds to 182–205; that stretch reads SGVPRGMSTCHMQWPEPAAAWRAG. The helical transmembrane segment at 206-231 threads the bilayer; the sequence is FIIYTAALGFFGPLLVICLCYLLIVV. Over 232–257 the chain is Cytoplasmic; that stretch reads KVRSAGRRVWAPSCQRRRRSERRVTR. Residues 258-279 traverse the membrane as a helical segment; the sequence is MVVAVVALFVLCWMPFYVLNIV. Residues 280–293 lie on the Extracellular side of the membrane; it reads NVVCPLPEEPAFFG. The helical transmembrane segment at 294–316 threads the bilayer; the sequence is LYFLVVALPYANSCANPILYGFL. The Cytoplasmic portion of the chain corresponds to 317 to 418; sequence SYRFKQGFRR…KSSTMRISYL (102 aa). Phosphoserine is present on residues S332 and S337. The segment at 335-418 is disordered; the sequence is VRSQEPTVGP…KSSTMRISYL (84 aa). T348 is subject to Phosphothreonine. Over residues 348–360 the composition is skewed to acidic residues; it reads TEEEDEEEEDGEE. Over residues 361-371 the composition is skewed to basic and acidic residues; sequence SREGGKGKEMN. Polar residues-rich tracts occupy residues 373–385 and 395–418; these read RVSQITQPGTSGQ and KEQQLLPQEASTGEKSSTMRISYL.

This sequence belongs to the G-protein coupled receptor 1 family. As to quaternary structure, homodimer and heterodimer with SSTR2. Heterodimerization with SSTR2 inactivates SSTR3 receptor function. Phosphorylated. Phosphorylation increases upon somatostatin binding. In terms of tissue distribution, brain, pituitary and pancreas.

Its subcellular location is the cell membrane. Receptor for somatostatin-14 and -28. This receptor is coupled via pertussis toxin sensitive G proteins to inhibition of adenylyl cyclase. This is Somatostatin receptor type 3 (SSTR3) from Homo sapiens (Human).